Reading from the N-terminus, the 1962-residue chain is Myosin heavy chain, muscle (1962 aa).

Residues 33-82 (DSKKSCWIPDEKEGYLLGEIKATKGDIVSVGLQGGEVRDIKSEKVEKVNP) enclose the Myosin N-terminal SH3-like domain. The region spanning 86 to 777 (EKIEDMADMT…VLGQMEEFRD (692 aa)) is the Myosin motor domain. Residue 179–186 (GESGAGKT) participates in ATP binding. The actin-binding stretch occupies residues 656–678 (LNSLMTTLRSTQPHFVRCIIPNE). One can recognise an IQ domain in the interval 780-809 (LGKIMSWMQAWARGYLSRKGFKKLQEQRVA). A coiled-coil region spans residues 802–1927 (KLQEQRVALK…KFRAKGRAGS (1126 aa)). Disordered stretches follow at residues 1822–1862 (ENEL…NHER) and 1922–1962 (KGRA…ENEF).

It belongs to the TRAFAC class myosin-kinesin ATPase superfamily. Myosin family. In terms of assembly, muscle myosin is a hexameric protein that consists of 2 heavy chain subunits (MHC), 2 alkali light chain subunits (MLC) and 2 regulatory light chain subunits (MLC-2). As to expression, expressed in larval and adult muscles. Isoforms containing exon 9a are expressed in indirect flight muscles, exons 9a and 9b are expressed in jump muscles, exons 9b and 9c are expressed in other larval and adult muscles.

It localises to the cytoplasm. Its subcellular location is the myofibril. Muscle contraction. The polypeptide is Myosin heavy chain, muscle (Mhc) (Drosophila melanogaster (Fruit fly)).